The following is an 81-amino-acid chain: Cytochrome c oxidase subunit 7B2, mitochondrial (81 aa).

A mitochondrion-targeting transit peptide spans 1–25 (MMFPLARNALSSLKIRSILQSMARQ). Over 26 to 33 (SHVKHSPD) the chain is Mitochondrial matrix. The helical transmembrane segment at 34–60 (FHDKYGNAVLASGTAFCVVAWVFTATQ) threads the bilayer. At 61–81 (IGIEWNLSPVGRVTPKEWKHQ) the chain is on the mitochondrial intermembrane side.

Belongs to the cytochrome c oxidase VIIb family. In terms of assembly, component of the cytochrome c oxidase (complex IV, CIV), a multisubunit enzyme composed of 14 subunits. The complex is composed of a catalytic core of 3 subunits MT-CO1, MT-CO2 and MT-CO3, encoded in the mitochondrial DNA, and 11 supernumerary subunits COX4I, COX5A, COX5B, COX6A, COX6B, COX6C, COX7A, COX7B, COX7C, COX8 and NDUFA4, which are encoded in the nuclear genome. The complex exists as a monomer or a dimer and forms supercomplexes (SCs) in the inner mitochondrial membrane with NADH-ubiquinone oxidoreductase (complex I, CI) and ubiquinol-cytochrome c oxidoreductase (cytochrome b-c1 complex, complex III, CIII), resulting in different assemblies (supercomplex SCI(1)III(2)IV(1) and megacomplex MCI(2)III(2)IV(2)).

The protein resides in the mitochondrion inner membrane. It participates in energy metabolism; oxidative phosphorylation. Its function is as follows. Component of the cytochrome c oxidase, the last enzyme in the mitochondrial electron transport chain which drives oxidative phosphorylation. The respiratory chain contains 3 multisubunit complexes succinate dehydrogenase (complex II, CII), ubiquinol-cytochrome c oxidoreductase (cytochrome b-c1 complex, complex III, CIII) and cytochrome c oxidase (complex IV, CIV), that cooperate to transfer electrons derived from NADH and succinate to molecular oxygen, creating an electrochemical gradient over the inner membrane that drives transmembrane transport and the ATP synthase. Cytochrome c oxidase is the component of the respiratory chain that catalyzes the reduction of oxygen to water. Electrons originating from reduced cytochrome c in the intermembrane space (IMS) are transferred via the dinuclear copper A center (CU(A)) of subunit 2 and heme A of subunit 1 to the active site in subunit 1, a binuclear center (BNC) formed by heme A3 and copper B (CU(B)). The BNC reduces molecular oxygen to 2 water molecules using 4 electrons from cytochrome c in the IMS and 4 protons from the mitochondrial matrix. This is Cytochrome c oxidase subunit 7B2, mitochondrial (COX7B2) from Macaca fascicularis (Crab-eating macaque).